Reading from the N-terminus, the 380-residue chain is Cytochrome b (380 aa).

The next 4 membrane-spanning stretches (helical) occupy residues Phe-34–Thr-54, Trp-78–Ile-99, Trp-114–Leu-134, and Phe-179–Thr-199. Heme b is bound by residues His-84 and His-98. His-183 and His-197 together coordinate heme b. His-202 contacts a ubiquinone. 4 consecutive transmembrane segments (helical) span residues Leu-227 to Ser-247, Leu-289 to His-309, Leu-321 to Ser-341, and Phe-348 to Pro-368.

The protein belongs to the cytochrome b family. As to quaternary structure, the cytochrome bc1 complex contains 11 subunits: 3 respiratory subunits (MT-CYB, CYC1 and UQCRFS1), 2 core proteins (UQCRC1 and UQCRC2) and 6 low-molecular weight proteins (UQCRH/QCR6, UQCRB/QCR7, UQCRQ/QCR8, UQCR10/QCR9, UQCR11/QCR10 and a cleavage product of UQCRFS1). This cytochrome bc1 complex then forms a dimer. Requires heme b as cofactor.

It is found in the mitochondrion inner membrane. Component of the ubiquinol-cytochrome c reductase complex (complex III or cytochrome b-c1 complex) that is part of the mitochondrial respiratory chain. The b-c1 complex mediates electron transfer from ubiquinol to cytochrome c. Contributes to the generation of a proton gradient across the mitochondrial membrane that is then used for ATP synthesis. This chain is Cytochrome b (MT-CYB), found in Uria lomvia (Thick-billed murre).